Reading from the N-terminus, the 252-residue chain is Intraflagellar transport associated protein 2 (252 aa).

GTP contacts are provided by residues 35–42 (GPPKAGKT) and 118–125 (WDVSGDKK).

Belongs to the small GTPase superfamily. Rab family. Component of the IFT complex B composed of at least che-2, che-13, dyf-1, dyf-3, dyf-6, dyf-11, dyf-13, ift-20, ift-74, ift-81, ifta-2, osm-1, osm-5 and osm-6. Ciliated sensory neurons.

The protein resides in the cytoplasm. It localises to the cytoskeleton. It is found in the cilium axoneme. Its function is as follows. Component of the intraflagellar transport (IFT) complex B required for transport of proteins in the motile cilium. May be required for ciliary entrance and transport of specific ciliary cargo proteins such as che-3 which are related to motility. Regulates specific signaling activities in the cilia, such as the daf-2/insulin receptor-like transduction pathway. The sequence is that of Intraflagellar transport associated protein 2 from Caenorhabditis elegans.